The primary structure comprises 792 residues: Xaa-Pro dipeptidyl-peptidase (792 aa).

Residues Ser363, Asp482, and His513 each act as charge relay system in the active site.

This sequence belongs to the peptidase S15 family. In terms of assembly, homodimer.

It is found in the cytoplasm. The catalysed reaction is Hydrolyzes Xaa-Pro-|- bonds to release unblocked, N-terminal dipeptides from substrates including Ala-Pro-|-p-nitroanilide and (sequentially) Tyr-Pro-|-Phe-Pro-|-Gly-Pro-|-Ile.. Its function is as follows. Removes N-terminal dipeptides sequentially from polypeptides having unsubstituted N-termini provided that the penultimate residue is proline. In Lactobacillus delbrueckii subsp. bulgaricus (strain ATCC BAA-365 / Lb-18), this protein is Xaa-Pro dipeptidyl-peptidase.